A 443-amino-acid polypeptide reads, in one-letter code: Histidine--tRNA ligase (443 aa).

Positions 1 to 20 are enriched in basic and acidic residues; it reads MTESEKKQQKPQKAKAEKFK. The disordered stretch occupies residues 1 to 21; that stretch reads MTESEKKQQKPQKAKAEKFKA.

Belongs to the class-II aminoacyl-tRNA synthetase family. Homodimer.

It localises to the cytoplasm. The catalysed reaction is tRNA(His) + L-histidine + ATP = L-histidyl-tRNA(His) + AMP + diphosphate + H(+). The protein is Histidine--tRNA ligase of Corynebacterium jeikeium (strain K411).